Reading from the N-terminus, the 470-residue chain is ATP synthase subunit beta (470 aa).

148–155 (GGAGVGKT) lines the ATP pocket.

It belongs to the ATPase alpha/beta chains family. In terms of assembly, F-type ATPases have 2 components, CF(1) - the catalytic core - and CF(0) - the membrane proton channel. CF(1) has five subunits: alpha(3), beta(3), gamma(1), delta(1), epsilon(1). CF(0) has three main subunits: a(1), b(2) and c(9-12). The alpha and beta chains form an alternating ring which encloses part of the gamma chain. CF(1) is attached to CF(0) by a central stalk formed by the gamma and epsilon chains, while a peripheral stalk is formed by the delta and b chains.

It is found in the cell inner membrane. The catalysed reaction is ATP + H2O + 4 H(+)(in) = ADP + phosphate + 5 H(+)(out). Produces ATP from ADP in the presence of a proton gradient across the membrane. The catalytic sites are hosted primarily by the beta subunits. This is ATP synthase subunit beta from Saccharophagus degradans (strain 2-40 / ATCC 43961 / DSM 17024).